The chain runs to 591 residues: Aspartate--tRNA ligase (591 aa).

Residue Glu-176 coordinates L-aspartate. The segment at 200–203 (QILK) is aspartate. L-aspartate is bound at residue Arg-222. ATP-binding positions include 222–224 (RDE) and Gln-231. His-450 contributes to the L-aspartate binding site. Glu-484 provides a ligand contact to ATP. Position 491 (Arg-491) interacts with L-aspartate. ATP is bound at residue 536-539 (GLDR).

Belongs to the class-II aminoacyl-tRNA synthetase family. Type 1 subfamily. As to quaternary structure, homodimer.

The protein localises to the cytoplasm. The catalysed reaction is tRNA(Asp) + L-aspartate + ATP = L-aspartyl-tRNA(Asp) + AMP + diphosphate. Its function is as follows. Catalyzes the attachment of L-aspartate to tRNA(Asp) in a two-step reaction: L-aspartate is first activated by ATP to form Asp-AMP and then transferred to the acceptor end of tRNA(Asp). This chain is Aspartate--tRNA ligase, found in Listeria monocytogenes serotype 4a (strain HCC23).